Consider the following 58-residue polypeptide: Large ribosomal subunit protein uL30 (58 aa).

The protein belongs to the universal ribosomal protein uL30 family. As to quaternary structure, part of the 50S ribosomal subunit.

This is Large ribosomal subunit protein uL30 from Vibrio campbellii (strain ATCC BAA-1116).